Here is a 206-residue protein sequence, read N- to C-terminus: Small ribosomal subunit protein uS4 (206 aa).

In terms of domain architecture, S4 RNA-binding spans 96-160 (CRLDNVVYRM…AQLRIVQALE (65 aa)).

This sequence belongs to the universal ribosomal protein uS4 family. As to quaternary structure, part of the 30S ribosomal subunit. Contacts protein S5. The interaction surface between S4 and S5 is involved in control of translational fidelity.

Its function is as follows. One of the primary rRNA binding proteins, it binds directly to 16S rRNA where it nucleates assembly of the body of the 30S subunit. Functionally, with S5 and S12 plays an important role in translational accuracy. The sequence is that of Small ribosomal subunit protein uS4 from Pseudomonas putida (strain GB-1).